We begin with the raw amino-acid sequence, 904 residues long: Phosphoenolpyruvate carboxylase (904 aa).

Active-site residues include H151 and K570.

This sequence belongs to the PEPCase type 1 family. It depends on Mg(2+) as a cofactor.

It carries out the reaction oxaloacetate + phosphate = phosphoenolpyruvate + hydrogencarbonate. Functionally, forms oxaloacetate, a four-carbon dicarboxylic acid source for the tricarboxylic acid cycle. In Xanthomonas campestris pv. campestris (strain ATCC 33913 / DSM 3586 / NCPPB 528 / LMG 568 / P 25), this protein is Phosphoenolpyruvate carboxylase.